The primary structure comprises 238 residues: Ribonuclease PH (238 aa).

Phosphate is bound by residues Arg-86 and 124–126 (GTR).

Belongs to the RNase PH family. In terms of assembly, homohexameric ring arranged as a trimer of dimers.

The catalysed reaction is tRNA(n+1) + phosphate = tRNA(n) + a ribonucleoside 5'-diphosphate. Its function is as follows. Phosphorolytic 3'-5' exoribonuclease that plays an important role in tRNA 3'-end maturation. Removes nucleotide residues following the 3'-CCA terminus of tRNAs; can also add nucleotides to the ends of RNA molecules by using nucleoside diphosphates as substrates, but this may not be physiologically important. Probably plays a role in initiation of 16S rRNA degradation (leading to ribosome degradation) during starvation. The sequence is that of Ribonuclease PH from Geotalea daltonii (strain DSM 22248 / JCM 15807 / FRC-32) (Geobacter daltonii).